A 263-amino-acid chain; its full sequence is 3-deoxy-manno-octulosonate cytidylyltransferase 1 (263 aa).

It belongs to the KdsB family.

It is found in the cytoplasm. The catalysed reaction is 3-deoxy-alpha-D-manno-oct-2-ulosonate + CTP = CMP-3-deoxy-beta-D-manno-octulosonate + diphosphate. It functions in the pathway nucleotide-sugar biosynthesis; CMP-3-deoxy-D-manno-octulosonate biosynthesis; CMP-3-deoxy-D-manno-octulosonate from 3-deoxy-D-manno-octulosonate and CTP: step 1/1. It participates in bacterial outer membrane biogenesis; lipopolysaccharide biosynthesis. Functionally, activates KDO (a required 8-carbon sugar) for incorporation into bacterial lipopolysaccharide in Gram-negative bacteria. In Burkholderia ambifaria (strain ATCC BAA-244 / DSM 16087 / CCUG 44356 / LMG 19182 / AMMD) (Burkholderia cepacia (strain AMMD)), this protein is 3-deoxy-manno-octulosonate cytidylyltransferase 1.